The chain runs to 314 residues: DNA-directed RNA polymerase subunit alpha (314 aa).

The tract at residues 1-228 is alpha N-terminal domain (alpha-NTD); sequence MIEIEKPKIE…EHLNIFVGLT (228 aa). Positions 246 to 314 are alpha C-terminal domain (alpha-CTD); sequence EKVLEMTIEE…ELGLGLRKDD (69 aa).

Belongs to the RNA polymerase alpha chain family. As to quaternary structure, homodimer. The RNAP catalytic core consists of 2 alpha, 1 beta, 1 beta' and 1 omega subunit. When a sigma factor is associated with the core the holoenzyme is formed, which can initiate transcription.

It carries out the reaction RNA(n) + a ribonucleoside 5'-triphosphate = RNA(n+1) + diphosphate. DNA-dependent RNA polymerase catalyzes the transcription of DNA into RNA using the four ribonucleoside triphosphates as substrates. The chain is DNA-directed RNA polymerase subunit alpha from Bacillus velezensis (strain DSM 23117 / BGSC 10A6 / LMG 26770 / FZB42) (Bacillus amyloliquefaciens subsp. plantarum).